The sequence spans 1076 residues: MDPEALNLEFYDKNGLDNPIHFRCDPKRIGMTLPSPDFSVDDVLELVGGNRMIEVVQVQNQGSVKMSLQEFINFYKTPQEKREVLYNVLSLEFSQTPLEDLVKSPELVRQIDWVGNQWPDALRQRWISFNGRDKKFYNPHHTFPKVQNYCLMSVANCYTDFHIDFSGTSVWYHVLKGRKVFWLIPPTETNFFIYQEFIKTVNDNAFFGKSVEKCHVAILEPGDTMLIPSGWIHAVYTPDDSLVFGGNFLHSQSCKTQLRVYQVENKLNITRKFRLPYNEELIFYVIADYVKQWTGREYVRPLRIEDAKYDYVGDKWKTAGGHHKKIEYSDYETGVELTNDMIKGDEESTKDEVKVIAMHAENSLFGYPMVSKATFSADTGLEEEADEDEVKYQETKEEMDARRDAEIDELANSNSLIFYKNRTHDFVRNKCVPDHKLPIGHEPPIYFNDDEISRISPRLLDELETLGTYIRRKARVEVAEGICQPASLINTFQTVLKKRRSELTGKKFEFNQIMPRRYTRSTMETGEYDFQPTQEVPQESARRSTRFKVDNFPDELLESEVTDKPIILPQQPSSGPLEYLPAPKDEIKEDINGFEEEFEEEYEGIGQRDDQEEEEYDAEEPEDQEEEEEDEYQAEEYTPTPVTRRSSSRRSGAKNDESEEVSVKKDKKEKMEKVEKDEKRRNSKSKKDKISKEKKKKERERIELESQLDAELRAAHGGGSSKSKKKKPEKPAFVGGLPTSSIQIDPVVSNPYNYDPRMEMMKLGTGQLKSAYRKTKNNVELHIEKNLYKIEPKRGSEEGSQSREQSMEPEHSTPVFTTFDDINEANNDHYDGQKPPTKRAKYEAISVDTYETPSSSRNKEHKEYRPSPNAAPTPSPSHHQKPKLSSPAMVSSTNEYQLRKHMSSERRSSDAGSAMKKGVYMPAMSRQDKMIAEGASAPSSRHSSISSERRPSFIPDFNSSRNSSIDTPYTPTTVTPSRSSWLPNTSSINRHSIEDDSPIDVVNDSLSPINIASSPTYPTAITPPPVTLSDLKKDMSNGRKSHSQHHDDGHKHKIPSKEAIAELKLLVGKLKAINDS.

Positions phenylalanine 93 to asparagine 265 constitute a JmjC domain. Threonine 159 serves as a coordination point for substrate. 2 residues coordinate Fe cation: histidine 162 and aspartate 164. Residue lysine 179 participates in substrate binding. Residue histidine 233 coordinates Fe cation. 2 disordered regions span residues phenylalanine 598–valine 748 and lysine 789–serine 1056. Positions aspartate 610 to alanine 634 are enriched in acidic residues. The segment covering alanine 653 to arginine 680 has biased composition (basic and acidic residues). Residues arginine 681–glutamate 698 show a composition bias toward basic residues. 2 stretches are compositionally biased toward basic and acidic residues: residues arginine 699–alanine 714 and lysine 789–histidine 811. A compositionally biased stretch (low complexity) spans alanine 935 to serine 946. 2 stretches are compositionally biased toward polar residues: residues phenylalanine 957–arginine 990 and aspartate 1004–threonine 1019. A compositionally biased stretch (basic and acidic residues) spans glutamine 1044–serine 1056.

This sequence belongs to the JHDM1 histone demethylase family. Requires Fe(2+) as cofactor.

Its subcellular location is the nucleus. The catalysed reaction is N(6),N(6)-dimethyl-L-lysyl(36)-[histone H3] + 2 2-oxoglutarate + 2 O2 = L-lysyl(36)-[histone H3] + 2 formaldehyde + 2 succinate + 2 CO2. In terms of biological role, histone demethylase that specifically demethylates 'Lys-36' of histone H3, thereby playing a central role in histone code. Has a role in regulating lifespan. This Caenorhabditis elegans protein is JmjC domain-containing histone demethylation protein 1 (jhdm-1).